The chain runs to 86 residues: Small ribosomal subunit protein eS27y (86 aa).

The C4-type zinc-finger motif lies at 39–61 (CQGCFNITTVFSHSQTVVVCGNC).

Belongs to the eukaryotic ribosomal protein eS27 family. It depends on Zn(2+) as a cofactor.

In terms of biological role, may be involved in the elimination of damaged mRNA after UV irradiation. This chain is Small ribosomal subunit protein eS27y (RPS27B), found in Arabidopsis thaliana (Mouse-ear cress).